Consider the following 103-residue polypeptide: ATP synthase F(0) complex subunit g, mitochondrial (103 aa).

At alanine 2 the chain carries N-acetylalanine. Lysine 11, lysine 24, lysine 35, and lysine 54 each carry N6-acetyllysine.

This sequence belongs to the ATPase g subunit family. Component of the ATP synthase complex composed at least of ATP5F1A/subunit alpha, ATP5F1B/subunit beta, ATP5MC1/subunit c (homooctomer), MT-ATP6/subunit a, MT-ATP8/subunit 8, ATP5ME/subunit e, ATP5MF/subunit f, ATP5MG/subunit g, ATP5MK/subunit k, ATP5MJ/subunit j, ATP5F1C/subunit gamma, ATP5F1D/subunit delta, ATP5F1E/subunit epsilon, ATP5PF/subunit F6, ATP5PB/subunit b, ATP5PD/subunit d, ATP5PO/subunit OSCP. ATP synthase complex consists of a soluble F(1) head domain (subunits alpha(3) and beta(3)) - the catalytic core - and a membrane F(0) domain - the membrane proton channel (subunits c, a, 8, e, f, g, k and j). These two domains are linked by a central stalk (subunits gamma, delta, and epsilon) rotating inside the F1 region and a stationary peripheral stalk (subunits F6, b, d, and OSCP).

Its subcellular location is the mitochondrion. It localises to the mitochondrion inner membrane. Functionally, subunit g, of the mitochondrial membrane ATP synthase complex (F(1)F(0) ATP synthase or Complex V) that produces ATP from ADP in the presence of a proton gradient across the membrane which is generated by electron transport complexes of the respiratory chain. ATP synthase complex consist of a soluble F(1) head domain - the catalytic core - and a membrane F(1) domain - the membrane proton channel. These two domains are linked by a central stalk rotating inside the F(1) region and a stationary peripheral stalk. During catalysis, ATP synthesis in the catalytic domain of F(1) is coupled via a rotary mechanism of the central stalk subunits to proton translocation. In vivo, can only synthesize ATP although its ATP hydrolase activity can be activated artificially in vitro. Part of the complex F(0) domain. The protein is ATP synthase F(0) complex subunit g, mitochondrial of Mus musculus (Mouse).